The following is a 196-amino-acid chain: MIPVVIEQTSRGERSYDIYSRLLKDRIIMLTGPVEDNMANSVIAQLLFLDAQDSTKDIYLYVNTPGGSVSAGLAIVDTMNFIKSDVQTIVMGMAASMGTIIASSGAKGKRFMLPNAEYMIHQPMGGTGGGTQQTDMAIAAEHLLKTRKTLEQILADNSGKTVEQIHADAERDYWMSAEETLAYGFIDEIMANNNLS.

Residue serine 96 is the Nucleophile of the active site. Histidine 121 is a catalytic residue.

It belongs to the peptidase S14 family. As to quaternary structure, fourteen ClpP subunits assemble into 2 heptameric rings which stack back to back to give a disk-like structure with a central cavity, resembling the structure of eukaryotic proteasomes.

The protein resides in the cytoplasm. The enzyme catalyses Hydrolysis of proteins to small peptides in the presence of ATP and magnesium. alpha-casein is the usual test substrate. In the absence of ATP, only oligopeptides shorter than five residues are hydrolyzed (such as succinyl-Leu-Tyr-|-NHMec, and Leu-Tyr-Leu-|-Tyr-Trp, in which cleavage of the -Tyr-|-Leu- and -Tyr-|-Trp bonds also occurs).. Cleaves peptides in various proteins in a process that requires ATP hydrolysis. Has a chymotrypsin-like activity. Plays a major role in the degradation of misfolded proteins. This Streptococcus gordonii (strain Challis / ATCC 35105 / BCRC 15272 / CH1 / DL1 / V288) protein is ATP-dependent Clp protease proteolytic subunit.